Consider the following 325-residue polypeptide: Transcription initiation factor IIB 2 (325 aa).

The segment covering 1 to 13 has biased composition (polar residues); sequence MSDSTIRTYSSDQ. The segment at 1–29 is disordered; the sequence is MSDSTIRTYSSDQRQTDNDETVSTPDEDV. The TFIIB-type zinc-finger motif lies at 28–58; that stretch reads DVLTCPECGGQVIDDEEHGESVCVDCGLVVE. Zn(2+) is bound by residues cysteine 32, cysteine 35, cysteine 50, and cysteine 53. The segment at 73–93 is disordered; the sequence is STEKDEKSRVGAPTTNMMHDK. Tandem repeats lie at residues 144–227 and 238–319.

The protein belongs to the TFIIB family.

Functionally, stabilizes TBP binding to an archaeal box-A promoter. Also responsible for recruiting RNA polymerase II to the pre-initiation complex (DNA-TBP-TFIIB). In Halobacterium salinarum (strain ATCC 700922 / JCM 11081 / NRC-1) (Halobacterium halobium), this protein is Transcription initiation factor IIB 2.